Reading from the N-terminus, the 374-residue chain is Ferroptosis suppressor protein 1 (374 aa).

The N-myristoyl glycine moiety is linked to residue glycine 2. The chain crosses the membrane as a helical span at residues 13–35 (VVIVGGGFAGIAAASQLKSFGIP). Residues 17–21 (GGGFA), arginine 53, and valine 81 each bind 6-hydroxy-FAD. Lysine 167 carries the N6-acetyllysine modification. Aspartate 285 is a binding site for 6-hydroxy-FAD.

The protein belongs to the FAD-dependent oxidoreductase family. The cofactor is 6-hydroxy-FAD. In terms of processing, N-myristoylation at Gly-2 mediates the recruitment to lipid droplets and plasma membrane. Acetylation at Lys-167 prevents AIFM2 ubiquitination and degradation, thereby inhibiting ferroptosis. KAT2B mediates acetylation at Lys-167, while HDAC3 removes it. Post-translationally, ubiquitinated. AIFM2 undergoes 'Lys-29'-ubiquitination and proteasomal degradation, which is inhibited by acetylation at Lys-167.

The protein localises to the lipid droplet. It is found in the cell membrane. It localises to the cytoplasm. Its subcellular location is the mitochondrion membrane. The protein resides in the nucleus. It carries out the reaction ubiquinone-10 + NADH + H(+) = ubiquinol-10 + NAD(+). It catalyses the reaction phylloquinone + NADH + H(+) = phylloquinol + NAD(+). The catalysed reaction is menaquinone-4 + NADH + H(+) = menaquinol-4 + NAD(+). The enzyme catalyses menadione + NADH + H(+) = menadiol + NAD(+). Its activity is regulated as follows. The modification by 4-hydroxy-2-nonenal (HNE) adduction in mitochondria results in loss of the oxidoreductase activity and activation of a novel function in mitochondrial oxidative stress signaling. Functionally, a NAD(P)H-dependent oxidoreductase that acts as a key inhibitor of ferroptosis. At the plasma membrane, catalyzes reduction of coenzyme Q/ubiquinone-10 to ubiquinol-10, a lipophilic radical-trapping antioxidant that prevents lipid oxidative damage and consequently ferroptosis. Acts in parallel to GPX4 to suppress phospholipid peroxidation and ferroptosis. This anti-ferroptotic function is independent of cellular glutathione levels. Also acts as a potent radical-trapping antioxidant by mediating warfarin-resistant vitamin K reduction in the canonical vitamin K cycle: catalyzes NAD(P)H-dependent reduction of vitamin K (phylloquinone, menaquinone-4 and menadione) to hydroquinone forms. Hydroquinones act as potent radical-trapping antioxidants inhibitor of phospholipid peroxidation and ferroptosis. May play a role in mitochondrial stress signaling. Upon oxidative stress, associates with the lipid peroxidation end product 4-hydroxy-2-nonenal (HNE) forming a lipid adduct devoid of oxidoreductase activity, which then translocates from mitochondria into the nucleus triggering DNA damage and cell death. This is Ferroptosis suppressor protein 1 (aifm2) from Xenopus laevis (African clawed frog).